Reading from the N-terminus, the 93-residue chain is Early nodulin-12A (93 aa).

A signal peptide spans 1 to 24; it reads MASFLLSILVFFLSALVLVPQGFA. The interval 30–93 is disordered; the sequence is PAYRPPQTEP…HPPSEDNIHF (64 aa). A run of 10 repeats spans residues 34-38, 39-43, 44-48, 49-53, 54-58, 59-63, 64-68, 69-73, 74-78, and 79-83. The interval 34 to 83 is 10 X 5 AA tandem repeats of P-P-[HQVRT]-[HKNT]-[DEKR]; the sequence is PPQTEPPVHKPPHKEPPVHKPPHKDPPVNKPPQKEPPVHKPPRKEPPTHR. The span at 46-93 shows a compositional bias: basic and acidic residues; that stretch reads HKEPPVHKPPHKDPPVNKPPQKEPPVHKPPRKEPPTHRHPPSEDNIHF.

The protein belongs to the plant proline-rich protein superfamily. ENOD12 family. As to expression, more abundant in the young nodules than the mature nodules.

The protein resides in the secreted. Its subcellular location is the cell wall. Functionally, involved in the infection process during the plant-rhizobium interaction. The chain is Early nodulin-12A (ENOD12A) from Medicago sativa (Alfalfa).